The primary structure comprises 162 residues: uncharacterized protein (162 aa).

A signal peptide spans 1-24 (MKRGVATLPVILVILLSVAAGAGA).

This is an uncharacterized protein from Mycobacterium bovis (strain ATCC BAA-935 / AF2122/97).